We begin with the raw amino-acid sequence, 446 residues long: tRNA-2-methylthio-N(6)-dimethylallyladenosine synthase (446 aa).

Residues Lys5–Arg121 enclose the MTTase N-terminal domain. [4Fe-4S] cluster contacts are provided by Cys14, Cys50, Cys84, Cys159, Cys163, and Cys166. One can recognise a Radical SAM core domain in the interval Gly145–Glu375. The TRAM domain occupies Ile378 to Thr440.

It belongs to the methylthiotransferase family. MiaB subfamily. Monomer. Requires [4Fe-4S] cluster as cofactor.

It is found in the cytoplasm. The catalysed reaction is N(6)-dimethylallyladenosine(37) in tRNA + (sulfur carrier)-SH + AH2 + 2 S-adenosyl-L-methionine = 2-methylsulfanyl-N(6)-dimethylallyladenosine(37) in tRNA + (sulfur carrier)-H + 5'-deoxyadenosine + L-methionine + A + S-adenosyl-L-homocysteine + 2 H(+). Catalyzes the methylthiolation of N6-(dimethylallyl)adenosine (i(6)A), leading to the formation of 2-methylthio-N6-(dimethylallyl)adenosine (ms(2)i(6)A) at position 37 in tRNAs that read codons beginning with uridine. The polypeptide is tRNA-2-methylthio-N(6)-dimethylallyladenosine synthase (Geobacter sulfurreducens (strain ATCC 51573 / DSM 12127 / PCA)).